Here is a 312-residue protein sequence, read N- to C-terminus: Methionyl-tRNA formyltransferase (312 aa).

109 to 112 (SLLP) lines the (6S)-5,6,7,8-tetrahydrofolate pocket.

This sequence belongs to the Fmt family.

The enzyme catalyses L-methionyl-tRNA(fMet) + (6R)-10-formyltetrahydrofolate = N-formyl-L-methionyl-tRNA(fMet) + (6S)-5,6,7,8-tetrahydrofolate + H(+). In terms of biological role, attaches a formyl group to the free amino group of methionyl-tRNA(fMet). The formyl group appears to play a dual role in the initiator identity of N-formylmethionyl-tRNA by promoting its recognition by IF2 and preventing the misappropriation of this tRNA by the elongation apparatus. The sequence is that of Methionyl-tRNA formyltransferase from Listeria welshimeri serovar 6b (strain ATCC 35897 / DSM 20650 / CCUG 15529 / CIP 8149 / NCTC 11857 / SLCC 5334 / V8).